The primary structure comprises 371 residues: Aminomethyltransferase (371 aa).

Belongs to the GcvT family. The glycine cleavage system is composed of four proteins: P, T, L and H.

It catalyses the reaction N(6)-[(R)-S(8)-aminomethyldihydrolipoyl]-L-lysyl-[protein] + (6S)-5,6,7,8-tetrahydrofolate = N(6)-[(R)-dihydrolipoyl]-L-lysyl-[protein] + (6R)-5,10-methylene-5,6,7,8-tetrahydrofolate + NH4(+). Its function is as follows. The glycine cleavage system catalyzes the degradation of glycine. This is Aminomethyltransferase from Cutibacterium acnes (strain DSM 16379 / KPA171202) (Propionibacterium acnes).